We begin with the raw amino-acid sequence, 219 residues long: 2-hydroxy-3-keto-5-methylthiopentenyl-1-phosphate phosphatase (219 aa).

This sequence belongs to the HAD-like hydrolase superfamily. MtnX family.

The enzyme catalyses 2-hydroxy-5-methylsulfanyl-3-oxopent-1-enyl phosphate + H2O = 1,2-dihydroxy-5-(methylsulfanyl)pent-1-en-3-one + phosphate. It functions in the pathway amino-acid biosynthesis; L-methionine biosynthesis via salvage pathway; L-methionine from S-methyl-5-thio-alpha-D-ribose 1-phosphate: step 4/6. Functionally, dephosphorylates 2-hydroxy-3-keto-5-methylthiopentenyl-1-phosphate (HK-MTPenyl-1-P) yielding 1,2-dihydroxy-3-keto-5-methylthiopentene (DHK-MTPene). This is 2-hydroxy-3-keto-5-methylthiopentenyl-1-phosphate phosphatase from Bacillus cereus (strain ATCC 10987 / NRS 248).